We begin with the raw amino-acid sequence, 377 residues long: uncharacterized protein (377 aa).

2 helical membrane passes run 71–91 (IIAT…LVGS) and 140–160 (AEAA…PTLF).

It is found in the membrane. This is an uncharacterized protein from Coxiella burnetii (strain RSA 493 / Nine Mile phase I).